We begin with the raw amino-acid sequence, 149 residues long: MLFRGRSHRSLDPKGRLMLPPEFRDILLSRSEEGKLVLTSFDGCVVGYPYPDWVEFEDKFNRLKNPSRKMRDFRRLVIGGAEEMTADPQGRVRVSRSHMDYAGLTKDVVLVGQGSRFEIWDQSKFDAIVAQDFDDVTEELAESGIDFCF.

SpoVT-AbrB domains are found at residues R6 to D52 and A81 to K124.

The protein belongs to the MraZ family. Forms oligomers.

It localises to the cytoplasm. The protein resides in the nucleoid. In Nitratidesulfovibrio vulgaris (strain ATCC 29579 / DSM 644 / CCUG 34227 / NCIMB 8303 / VKM B-1760 / Hildenborough) (Desulfovibrio vulgaris), this protein is Transcriptional regulator MraZ.